A 218-amino-acid chain; its full sequence is Putative receptor like protein 25 (218 aa).

Over Met1–Lys178 the chain is Extracellular. LRR repeat units lie at residues Leu34–Leu58, Lys59–Leu82, Ile83–Leu106, and Phe108–Gly131. The N-linked (GlcNAc...) asparagine glycan is linked to Asn65. An N-linked (GlcNAc...) asparagine glycan is attached at Asn113. The helical transmembrane segment at Ala179 to Ala199 threads the bilayer. At Ser200–His218 the chain is on the cytoplasmic side.

This sequence belongs to the RLP family.

The protein localises to the cell membrane. This Arabidopsis thaliana (Mouse-ear cress) protein is Putative receptor like protein 25.